A 201-amino-acid chain; its full sequence is Probable molybdenum cofactor guanylyltransferase (201 aa).

Residues 6-8 (LAG), Lys18, Asp67, and Asp92 contribute to the GTP site. Asp92 lines the Mg(2+) pocket.

This sequence belongs to the MobA family. Requires Mg(2+) as cofactor.

It is found in the cytoplasm. The enzyme catalyses Mo-molybdopterin + GTP + H(+) = Mo-molybdopterin guanine dinucleotide + diphosphate. In terms of biological role, transfers a GMP moiety from GTP to Mo-molybdopterin (Mo-MPT) cofactor (Moco or molybdenum cofactor) to form Mo-molybdopterin guanine dinucleotide (Mo-MGD) cofactor. The sequence is that of Probable molybdenum cofactor guanylyltransferase from Thermococcus kodakarensis (strain ATCC BAA-918 / JCM 12380 / KOD1) (Pyrococcus kodakaraensis (strain KOD1)).